The chain runs to 162 residues: Protein-export protein SecB (162 aa).

It belongs to the SecB family. As to quaternary structure, homotetramer, a dimer of dimers. One homotetramer interacts with 1 SecA dimer.

It localises to the cytoplasm. In terms of biological role, one of the proteins required for the normal export of preproteins out of the cell cytoplasm. It is a molecular chaperone that binds to a subset of precursor proteins, maintaining them in a translocation-competent state. It also specifically binds to its receptor SecA. In Legionella pneumophila subsp. pneumophila (strain Philadelphia 1 / ATCC 33152 / DSM 7513), this protein is Protein-export protein SecB.